Reading from the N-terminus, the 85-residue chain is Toxin BmKaIT1 (85 aa).

Residues 1–19 (MNYLVMISFAFLLMTGVES) form the signal peptide. Residues 21–83 (RDAYIAQNYN…VPIRVPGKCH (63 aa)) enclose the LCN-type CS-alpha/beta domain. Intrachain disulfides connect cysteine 31-cysteine 82, cysteine 35-cysteine 55, cysteine 41-cysteine 65, and cysteine 45-cysteine 67. Residues 84-85 (RR) constitute a propeptide, removed by a carboxypeptidase.

It belongs to the long (4 C-C) scorpion toxin superfamily. Sodium channel inhibitor family. Alpha subfamily. In terms of tissue distribution, expressed by the venom gland.

The protein localises to the secreted. Its function is as follows. Alpha toxins bind voltage-independently at site-3 of sodium channels (Nav) and inhibit the inactivation of the activated channels, thereby blocking neuronal transmission. Shows a high toxicity toward insects and moderate toxicity against mammals. The sequence is that of Toxin BmKaIT1 from Olivierus martensii (Manchurian scorpion).